The chain runs to 103 residues: Translation initiation factor 1A (103 aa).

The 76-residue stretch at 11 to 86 (TRVRTPRENE…EKCDVIWRYT (76 aa)) folds into the S1-like domain.

Belongs to the eIF-1A family.

Seems to be required for maximal rate of protein biosynthesis. Enhances ribosome dissociation into subunits and stabilizes the binding of the initiator Met-tRNA(I) to 40 S ribosomal subunits. The polypeptide is Translation initiation factor 1A (eIF1A) (Methanococcus maripaludis (strain C5 / ATCC BAA-1333)).